The following is a 542-amino-acid chain: CTP synthase (542 aa).

The tract at residues 1 to 265 is amidoligase domain; that stretch reads MTKFVFVTGG…DEIVCHKLNL (265 aa). Serine 13 contributes to the CTP binding site. Serine 13 is a binding site for UTP. ATP contacts are provided by residues 14–19 and aspartate 71; that span reads SLGKGI. Mg(2+)-binding residues include aspartate 71 and glutamate 139. CTP contacts are provided by residues 146–148, 186–191, and lysine 222; these read DIE and KTKPTQ. Residues 186-191 and lysine 222 each bind UTP; that span reads KTKPTQ. The region spanning 290 to 542 is the Glutamine amidotransferase type-1 domain; it reads NVAFVGKYVD…IAAALANRKA (253 aa). Residue glycine 351 participates in L-glutamine binding. Cysteine 378 (nucleophile; for glutamine hydrolysis) is an active-site residue. L-glutamine contacts are provided by residues 379 to 382, glutamate 402, and arginine 468; that span reads LGMQ. Active-site residues include histidine 515 and glutamate 517.

The protein belongs to the CTP synthase family. As to quaternary structure, homotetramer.

It carries out the reaction UTP + L-glutamine + ATP + H2O = CTP + L-glutamate + ADP + phosphate + 2 H(+). The catalysed reaction is L-glutamine + H2O = L-glutamate + NH4(+). It catalyses the reaction UTP + NH4(+) + ATP = CTP + ADP + phosphate + 2 H(+). It functions in the pathway pyrimidine metabolism; CTP biosynthesis via de novo pathway; CTP from UDP: step 2/2. Allosterically activated by GTP, when glutamine is the substrate; GTP has no effect on the reaction when ammonia is the substrate. The allosteric effector GTP functions by stabilizing the protein conformation that binds the tetrahedral intermediate(s) formed during glutamine hydrolysis. Inhibited by the product CTP, via allosteric rather than competitive inhibition. In terms of biological role, catalyzes the ATP-dependent amination of UTP to CTP with either L-glutamine or ammonia as the source of nitrogen. Regulates intracellular CTP levels through interactions with the four ribonucleotide triphosphates. The polypeptide is CTP synthase (Methylobacillus flagellatus (strain ATCC 51484 / DSM 6875 / VKM B-1610 / KT)).